A 525-amino-acid chain; its full sequence is uncharacterized protein (525 aa).

An N-terminal signal peptide occupies residues 1–21; that stretch reads MLECLSALLVLFAGGGGSVLA. The Extracellular segment spans residues 22–448; that stretch reads AVQSKTVADP…ISAASQLDKR (427 aa). The disordered stretch occupies residues 242–264; it reads KVSSENCSKDTDDKSGSKKERNT. The helical transmembrane segment at 449–469 threads the bilayer; that stretch reads IFIFTAITVSITTLMMLGFSY. Topologically, residues 470-525 are cytoplasmic; it reads RSRVSFRDHSIDDSDDDNDWSDDEVEFDEEYFYSLPVSIPEKGISLDKMAQQLGVE.

It is found in the membrane. This is an uncharacterized protein from Saccharomyces cerevisiae (strain ATCC 204508 / S288c) (Baker's yeast).